A 236-amino-acid chain; its full sequence is Phosphoribosylaminoimidazole-succinocarboxamide synthase (236 aa).

The protein belongs to the SAICAR synthetase family.

It catalyses the reaction 5-amino-1-(5-phospho-D-ribosyl)imidazole-4-carboxylate + L-aspartate + ATP = (2S)-2-[5-amino-1-(5-phospho-beta-D-ribosyl)imidazole-4-carboxamido]succinate + ADP + phosphate + 2 H(+). The protein operates within purine metabolism; IMP biosynthesis via de novo pathway; 5-amino-1-(5-phospho-D-ribosyl)imidazole-4-carboxamide from 5-amino-1-(5-phospho-D-ribosyl)imidazole-4-carboxylate: step 1/2. The protein is Phosphoribosylaminoimidazole-succinocarboxamide synthase of Lysinibacillus sphaericus (strain C3-41).